The chain runs to 406 residues: Glucose-1-phosphate adenylyltransferase (406 aa).

Residues Tyr100, Gly165, 181 to 182 (EK), and Ser199 contribute to the alpha-D-glucose 1-phosphate site.

It belongs to the bacterial/plant glucose-1-phosphate adenylyltransferase family. As to quaternary structure, homotetramer.

It carries out the reaction alpha-D-glucose 1-phosphate + ATP + H(+) = ADP-alpha-D-glucose + diphosphate. Its pathway is glycan biosynthesis; glycogen biosynthesis. In terms of biological role, involved in the biosynthesis of ADP-glucose, a building block required for the elongation reactions to produce glycogen. Catalyzes the reaction between ATP and alpha-D-glucose 1-phosphate (G1P) to produce pyrophosphate and ADP-Glc. This chain is Glucose-1-phosphate adenylyltransferase, found in Streptomyces avermitilis (strain ATCC 31267 / DSM 46492 / JCM 5070 / NBRC 14893 / NCIMB 12804 / NRRL 8165 / MA-4680).